A 518-amino-acid chain; its full sequence is Glutamate--cysteine ligase (518 aa).

The protein belongs to the glutamate--cysteine ligase type 1 family. Type 1 subfamily.

The catalysed reaction is L-cysteine + L-glutamate + ATP = gamma-L-glutamyl-L-cysteine + ADP + phosphate + H(+). It functions in the pathway sulfur metabolism; glutathione biosynthesis; glutathione from L-cysteine and L-glutamate: step 1/2. The polypeptide is Glutamate--cysteine ligase (Shigella boydii serotype 4 (strain Sb227)).